Here is a 796-residue protein sequence, read N- to C-terminus: Polyribonucleotide nucleotidyltransferase (796 aa).

2 residues coordinate Mg(2+): Asp490 and Asp496. The 60-residue stretch at 557-616 (PRIESIFINKDKIRNVIGSGGKNIRDICEKTGAKIEIIQDGTVMIYAVNNEAVEYAKSMI) folds into the KH domain. The region spanning 626–693 (GKVFEGTVVE…DREHVQLSMR (68 aa)) is the S1 motif domain. Positions 714 to 736 (SFSDDSSSSGTSSSGSSFKESYS) are enriched in low complexity. The interval 714-796 (SFSDDSSSSG…HEVPRKPRFF (83 aa)) is disordered. Residues 740 to 755 (HGSHEKRRSGGSRSSR) are compositionally biased toward basic residues. Over residues 771–784 (SDFGNNNRSFSNSR) the composition is skewed to low complexity. A compositionally biased stretch (basic and acidic residues) spans 785 to 796 (NGHEVPRKPRFF).

It belongs to the polyribonucleotide nucleotidyltransferase family. Mg(2+) is required as a cofactor.

It is found in the cytoplasm. It catalyses the reaction RNA(n+1) + phosphate = RNA(n) + a ribonucleoside 5'-diphosphate. In terms of biological role, involved in mRNA degradation. Catalyzes the phosphorolysis of single-stranded polyribonucleotides processively in the 3'- to 5'-direction. This is Polyribonucleotide nucleotidyltransferase from Ehrlichia canis (strain Jake).